The following is a 490-amino-acid chain: Alginate production protein AlgE (490 aa).

The signal sequence occupies residues 1 to 32 (MNSSRSVNPRPSFAPRALSLAIALLLGAPAFA). Polar residues-rich tracts occupy residues 102-115 (DTLQ…NNSR) and 343-355 (QFQQ…NRSN). Disordered stretches follow at residues 102 to 121 (DTLQ…GREP) and 331 to 355 (ARGS…NRSN).

The protein belongs to the AlgE family.

It localises to the cell outer membrane. It functions in the pathway glycan biosynthesis; alginate biosynthesis. Functionally, has non-porin-like, channel-forming properties and probably functions as an alginate permeability pore. The sequence is that of Alginate production protein AlgE (algE) from Pseudomonas aeruginosa (strain ATCC 15692 / DSM 22644 / CIP 104116 / JCM 14847 / LMG 12228 / 1C / PRS 101 / PAO1).